The chain runs to 741 residues: G2 and S phase-expressed protein 1 (741 aa).

Ser73 is modified (phosphoserine). Disordered stretches follow at residues 101-120 (EVAQ…ETFV), 131-428 (EKEQ…KTVS), and 450-512 (FKVP…STRR). Polar residues predominate over residues 106–120 (ATPQNPVNQGKETFV). Positions 131–147 (EKEQKRDRSPMSLKRET) are enriched in basic and acidic residues. A phosphoserine mark is found at Ser139, Ser153, Ser191, and Ser245. Polar residues predominate over residues 173 to 209 (SPVSAGPAQTQSNQGLPCSSQPLPRESSTSQPPSQAG). Residues 246–261 (IQRTKLVNEKGSQSDV) are compositionally biased toward polar residues. Low complexity predominate over residues 310 to 321 (SSTSGSASSLES). Position 311 is a phosphoserine (Ser311). Polar residues predominate over residues 337–355 (QRSSIPASGSQRRTSTSKS). Positions 360 to 372 (PAASRQALPAAPA) are enriched in low complexity. A compositionally biased stretch (polar residues) spans 398–408 (SPLTQQPQTPE). Phosphoserine is present on Ser460. The residue at position 465 (Thr465) is a Phosphothreonine. Ser476, Ser493, Ser509, and Ser514 each carry phosphoserine. The span at 478-497 (TPASRVVSSTPVRRSSGTTP) shows a compositional bias: low complexity. Thr518 carries the phosphothreonine modification. 4 positions are modified to phosphoserine: Ser521, Ser541, Ser582, and Ser599. The interval 550-640 (LSSEPRRRST…VHGGGCSHTP (91 aa)) is disordered. A compositionally biased stretch (low complexity) spans 578–593 (QGLSSDESSSPPSSVP). Residue Thr696 is modified to Phosphothreonine. Phosphoserine is present on residues Ser720, Ser726, and Ser736.

Phosphorylated in mitosis.

Its subcellular location is the cytoplasm. The protein resides in the cytoskeleton. In terms of biological role, may be involved in p53-induced cell cycle arrest in G2/M phase by interfering with microtubule rearrangements that are required to enter mitosis. Overexpression delays G2/M phase progression. This chain is G2 and S phase-expressed protein 1 (Gtse1), found in Mus musculus (Mouse).